Reading from the N-terminus, the 113-residue chain is MHEMALCEGIIGIVEEEARKRAFAKVNVVCLEIGALSHVAPEALQFCFEAVAARTIAQGAKLEIVETPGTAWCMACSKSVEIKQRYEPCPSCGGYQLQVTGGEEMRVRELEVD.

Histidine 2 contributes to the Ni(2+) binding site. Positions 73, 76, 89, and 92 each coordinate Zn(2+).

It belongs to the HypA/HybF family.

In terms of biological role, involved in the maturation of [NiFe] hydrogenases. Required for nickel insertion into the metal center of the hydrogenase. In Bradyrhizobium diazoefficiens (strain JCM 10833 / BCRC 13528 / IAM 13628 / NBRC 14792 / USDA 110), this protein is Hydrogenase maturation factor HypA 2.